The primary structure comprises 772 residues: Endoplasmic reticulum membrane sensor NFE2L1 (772 aa).

The chain crosses the membrane as a helical; Signal-anchor for type II membrane protein span at residues Tyr7–Val24. The disordered stretch occupies residues Asp108–Gly148. Residues Val113–Gln131 show a composition bias toward polar residues. A cholesterol recognition/amino acid consensus (CRAC) region region spans residues Val191 to Lys199. Asn348 and Asn360 each carry an N-linked (GlcNAc...) asparagine glycan. The segment at Ser379 to Glu383 is CPD. Residues Asn412 and Asn423 are each glycosylated (N-linked (GlcNAc...) asparagine). 2 disordered regions span residues Glu470–Thr532 and Ser582–Arg613. Positions Asp476–Ser480 match the Destruction motif motif. A compositionally biased stretch (low complexity) spans Asp476–Ala523. Ser528 is modified (phosphoserine; by CK2). The segment covering Gly598 to Arg613 has biased composition (basic and acidic residues). Ser599 is subject to Phosphoserine; by PKA. The 64-residue stretch at Leu654 to Leu717 folds into the bZIP domain. The interval Arg656–Lys675 is basic motif. The tract at residues Leu682–Leu696 is leucine-zipper.

It belongs to the bZIP family. CNC subfamily. Interacts with KEAP1. In terms of assembly, interacts (via CPD region) with FBXW7; leading to its ubiquitination and degradation. Interacts with SYVN1/HRD1; leading to its ubiquitination and degradation. Interacts (when ubiquitinated) with DDI2; leading to its cleavage. As to quaternary structure, interacts (via the bZIP domain) with small MAF protein (MAFF, MAFG or MAFK); required for binding to antioxidant response elements (AREs) on DNA. Interacts (via Destruction motif) with BTRC; leading to its ubiquitination and degradation. Interacts with CEBPB; the heterodimer represses expression of DSPP during odontoblast differentiation. Interacts with MOTS-c, a peptide produced by the mitochondrially encoded 12S rRNA MT-RNR1. In terms of processing, cleaved at Leu-104 by the aspartyl protease DDI2 following retrotranslocation, releasing the protein from the endoplasmic reticulum membrane and forming the transcription factor NRF1 that translocates into the nucleus. Ubiquitination is prerequisite for cleavage by aspartyl protease DDI2. N-glycosylated in normal conditions, when it has a single-pass type II membrane protein topology, with the DNA-binding domain facing the endoplasmic reticulum lumen. Deglycosylated during retrotranslocation to the cytosolic side of the membrane, to have a single-pass type III membrane protein topology with the major part of the protein facing the cytosol. Post-translationally, ubiquitinated by the SCF(FBXW7) complex and SYVN1/HRD1, leading to its degradation by the proteasome. Ubiquitinated during retrotranslocation to the cytosolic side of the membrane: ubiquitination does not lead to degradation and is required for processing by the aspartyl protease DDI2 and subsequent release from the endoplasmic reticulum membrane. In terms of processing, phosphorylation by CK2 at Ser-528 inhibits transcription factor activity, possibly by affecting DNA-binding activity. Phosphorylation at Ser-599 is required for interaction with CEBPB. Ubiquitinated by the SCF(BTRC) complex in the nucleus, leading to its degradation by the proteasome.

Its subcellular location is the endoplasmic reticulum membrane. The protein resides in the nucleus. In terms of biological role, endoplasmic reticulum membrane sensor that translocates into the nucleus in response to various stresses to act as a transcription factor. Constitutes a precursor of the transcription factor NRF1. Able to detect various cellular stresses, such as cholesterol excess, oxidative stress or proteasome inhibition. In response to stress, it is released from the endoplasmic reticulum membrane following cleavage by the protease DDI2 and translocates into the nucleus to form the transcription factor NRF1. Acts as a key sensor of cholesterol excess: in excess cholesterol conditions, the endoplasmic reticulum membrane form of the protein directly binds cholesterol via its CRAC motif, preventing cleavage and release of the transcription factor NRF1, thereby allowing expression of genes promoting cholesterol removal, such as CD36. Involved in proteasome homeostasis: in response to proteasome inhibition, it is released from the endoplasmic reticulum membrane, translocates to the nucleus and activates expression of genes encoding proteasome subunits. CNC-type bZIP family transcription factor that translocates to the nucleus and regulates expression of target genes in response to various stresses. Heterodimerizes with small-Maf proteins (MAFF, MAFG or MAFK) and binds DNA motifs including the antioxidant response elements (AREs), which regulate expression of genes involved in oxidative stress response. Activates or represses expression of target genes, depending on the context. Plays a key role in cholesterol homeostasis by acting as a sensor of cholesterol excess: in low cholesterol conditions, translocates into the nucleus and represses expression of genes involved in defense against cholesterol excess, such as CD36. In excess cholesterol conditions, the endoplasmic reticulum membrane form of the protein directly binds cholesterol via its CRAC motif, preventing cleavage and release of the transcription factor NRF1, thereby allowing expression of genes promoting cholesterol removal. Critical for redox balance in response to oxidative stress: acts by binding the AREs motifs on promoters and mediating activation of oxidative stress response genes, such as GCLC, GCLM, GSS, MT1 and MT2. Plays an essential role during fetal liver hematopoiesis: probably has a protective function against oxidative stress and is involved in lipid homeostasis in the liver. Involved in proteasome homeostasis: in response to proteasome inhibition, mediates the 'bounce-back' of proteasome subunits by translocating into the nucleus and activating expression of genes encoding proteasome subunits. Also involved in regulating glucose flux. Together with CEBPB; represses expression of DSPP during odontoblast differentiation. In response to ascorbic acid induction, activates expression of SP7/Osterix in osteoblasts. This Homo sapiens (Human) protein is Endoplasmic reticulum membrane sensor NFE2L1 (NFE2L1).